The primary structure comprises 345 residues: MDLLKELESLVPELERGLGQASSLQELEEQRIAFLGRKGRLAQVMAHLPELAPAERPRVGQAANTVKQALTELFEQRKVVLEQAKEAAALSRFDPSLPGRMPWRGSLHPVTLVMEEICSVFGALGYDIVTGPEVENDYHNFEALNMPPEHPARDMQDTLYITESILMRTHTSPLQVRTMKSLRPPVAAIAPGKVYRRDSDITHTPMFHQIEGFMVDHNVSMAELRGTLTSFLRTVFGGDTRVRFRPSFFPFTEPSAEVDISCCICGGKGHVGNEPCRVCKTTGWVEILGCGMIDPEVFKSVGYDPEVYTGFAFGLGVERVAMLKYGIGDLRMFFENDVRFLSQFA.

Position 253 (Glu253) interacts with Mg(2+).

It belongs to the class-II aminoacyl-tRNA synthetase family. Phe-tRNA synthetase alpha subunit type 1 subfamily. Tetramer of two alpha and two beta subunits. It depends on Mg(2+) as a cofactor.

The protein localises to the cytoplasm. It carries out the reaction tRNA(Phe) + L-phenylalanine + ATP = L-phenylalanyl-tRNA(Phe) + AMP + diphosphate + H(+). This Nitratidesulfovibrio vulgaris (strain DP4) (Desulfovibrio vulgaris) protein is Phenylalanine--tRNA ligase alpha subunit.